An 845-amino-acid polypeptide reads, in one-letter code: MSEVTVRQLADVVGTPVGRLLEQLREAGIGVDREDAAITEAQKLQLLRYLRHSHGASVEIATPKRITLNRRSHSEIQVNAGGGRSKTVNVEVRKKRTYIKRSAILEQERLAERQREEEEAQAGVQAQQEREARLIAEEEAKRQAAEEEAKRQAAEEEAKRQAAEEEAKRQAEAQVKRRLDVEKKPKNGLEPARTEKPASRKAKPRFRSEDRESEQKQRGTKFGRKELHIAPGKAGTSKRKKFRPQKAAPAAKHGFERPTAPIVHDVSIPETMTVAELAQKMSVKAAEVIKALMKLGIMATINQVLDQDTATIVVEEMGHKPKRLQENTLELELVQAEQEVSRQVSRAAVVTIMGHVDHGKTSLLDYIRRAKVATSEAGGITQHIGAYKVRSDKGEITFIDTPGHAAFTAMRARGAKVTDIVILVVAADDGAMPQTVEAIQHARAAGAPLVVAVNKIDRPDADPDRVKQELANHDVITEEWGGDTQFVNVSAKTGEGIDDLIEAILLQAEVMEIKVSAEGPARGVVIESRLDKGRGPVATILVQSGTLRKGDILLSGVETGRVRAMLTERGQEIIEAGPSTPVEILGLSGTPNAGDEAVVVPDERRAREIAGHRQAKEREVKLARQQSAKLENMFNEMEEGEIRALNLVIKADVQGSAEALSDSLTKLSTDKARVKVVAAGVGGINETDVNLAVASNAVIIGFNVRADAAARRLIAEKGIDLHYYSVIYNAIDEIKGALIGILDPEYREEIIGLARVDDVFRSPKLGAIAGCLVIEGSVRRNNPIRVLRDNIVVFEGQLESLRRFKDDVQEVRAGTECGIGVKDYKDVKVGDQIEVYERVRKEPAL.

Composition is skewed to basic and acidic residues over residues 139–198 (EAKR…EKPA) and 206–228 (FRSE…KELH). A disordered region spans residues 139–253 (EAKRQAAEEE…PQKAAPAAKH (115 aa)). The tr-type G domain occupies 345 to 512 (SRAAVVTIMG…AILLQAEVME (168 aa)). Residues 354–361 (GHVDHGKT) are G1. Residue 354-361 (GHVDHGKT) coordinates GTP. The G2 stretch occupies residues 379-383 (GITQH). The segment at 400 to 403 (DTPG) is G3. Residues 400-404 (DTPGH) and 454-457 (NKID) each bind GTP. Residues 454 to 457 (NKID) are G4. The tract at residues 490–492 (SAK) is G5.

This sequence belongs to the TRAFAC class translation factor GTPase superfamily. Classic translation factor GTPase family. IF-2 subfamily.

Its subcellular location is the cytoplasm. One of the essential components for the initiation of protein synthesis. Protects formylmethionyl-tRNA from spontaneous hydrolysis and promotes its binding to the 30S ribosomal subunits. Also involved in the hydrolysis of GTP during the formation of the 70S ribosomal complex. This is Translation initiation factor IF-2 from Nitrosococcus oceani (strain ATCC 19707 / BCRC 17464 / JCM 30415 / NCIMB 11848 / C-107).